The following is a 442-amino-acid chain: Cytochrome c biogenesis CcmF C-terminal-like mitochondrial protein (442 aa).

The next 3 helical transmembrane spans lie at 6–26 (NFFF…PVLL), 39–59 (PFFN…LVYL), and 122–142 (YLES…FFLA). Positions 151–175 (RARRRKGQTLRPNGNEQRRNDKMRC) are disordered. A compositionally biased stretch (basic and acidic residues) spans 166-175 (EQRRNDKMRC). A helical membrane pass occupies residues 411-431 (FIFFIWIGFMLASLGGLPSLL).

The protein belongs to the CcmF/CycK/Ccl1/NrfE/CcsA family. Interacts with CCMFN2.

Its subcellular location is the mitochondrion inner membrane. Its function is as follows. Forms a complex with CCMFN1, CCMFN2 and CCMH that performs the assembly of heme with c-type apocytochromes in mitochondria. This chain is Cytochrome c biogenesis CcmF C-terminal-like mitochondrial protein (CCMFC), found in Arabidopsis thaliana (Mouse-ear cress).